Consider the following 123-residue polypeptide: Small ribosomal subunit protein uS12 (123 aa).

Aspartate 89 bears the 3-methylthioaspartic acid mark.

The protein belongs to the universal ribosomal protein uS12 family. Part of the 30S ribosomal subunit. Contacts proteins S8 and S17. May interact with IF1 in the 30S initiation complex.

In terms of biological role, with S4 and S5 plays an important role in translational accuracy. Functionally, interacts with and stabilizes bases of the 16S rRNA that are involved in tRNA selection in the A site and with the mRNA backbone. Located at the interface of the 30S and 50S subunits, it traverses the body of the 30S subunit contacting proteins on the other side and probably holding the rRNA structure together. The combined cluster of proteins S8, S12 and S17 appears to hold together the shoulder and platform of the 30S subunit. The polypeptide is Small ribosomal subunit protein uS12 (Syntrophus aciditrophicus (strain SB)).